The following is a 200-amino-acid chain: Charged multivesicular body protein 6-A (200 aa).

Glycine 2 carries the N-myristoyl glycine lipid modification. A coiled-coil region spans residues 9–102 (RRSRVTEQDK…FAQIEMKVIE (94 aa)). The disordered stretch occupies residues 166-200 (EDLELPEAPSEPLPDTIPEKQAVKNKPKPQMIAAS). A Type-2 MIT-interacting motif motif is present at residues 168–179 (LELPEAPSEPLP).

It belongs to the SNF7 family. Probable core component of the endosomal sorting required for transport complex III (ESCRT-III). ESCRT-III components are thought to multimerize to form a flat lattice on the perimeter membrane of the endosome.

The protein localises to the endomembrane system. The protein resides in the late endosome membrane. Probable core component of the endosomal sorting required for transport complex III (ESCRT-III) which is involved in multivesicular bodies (MVBs) formation and sorting of endosomal cargo proteins into MVBs. MVBs contain intraluminal vesicles (ILVs) that are generated by invagination and scission from the limiting membrane of the endosome and mostly are delivered to lysosomes enabling degradation of membrane proteins, such as stimulated growth factor receptors, lysosomal enzymes and lipids. In the ESCRT-III complex, it probably serves as an acceptor for the ESCRT-II complex on endosomal membranes. The protein is Charged multivesicular body protein 6-A (chmp6-a) of Xenopus laevis (African clawed frog).